A 472-amino-acid chain; its full sequence is L-fuculokinase (472 aa).

The protein belongs to the FGGY kinase family. The cofactor is a divalent metal cation.

The enzyme catalyses L-fuculose + ATP = L-fuculose 1-phosphate + ADP + H(+). The protein operates within carbohydrate degradation; L-fucose degradation; L-lactaldehyde and glycerone phosphate from L-fucose: step 2/3. Catalyzes the phosphorylation of L-fuculose. The chain is L-fuculokinase from Salmonella typhi.